A 131-amino-acid chain; its full sequence is Small ribosomal subunit protein uS8 (131 aa).

The protein belongs to the universal ribosomal protein uS8 family. As to quaternary structure, part of the 30S ribosomal subunit. Contacts proteins S5 and S12.

Functionally, one of the primary rRNA binding proteins, it binds directly to 16S rRNA central domain where it helps coordinate assembly of the platform of the 30S subunit. The protein is Small ribosomal subunit protein uS8 of Hydrogenovibrio crunogenus (strain DSM 25203 / XCL-2) (Thiomicrospira crunogena).